We begin with the raw amino-acid sequence, 506 residues long: Chorion-specific transcription factor GCMb (506 aa).

A DNA-binding region (GCM) is located at residues 19–174 (LSWDINDPQM…KSETEARRSA (156 aa)). Residues Cys81, Cys87, Cys91, Cys118, Cys121, Cys130, His157, and His159 each coordinate Zn(2+). Positions 155–172 (GVHDHPRPESKSETEARR) are enriched in basic and acidic residues. A disordered region spans residues 155 to 213 (GVHDHPRPESKSETEARRSAIKRQMASFYQPQKKRIRESEAEENQDSSGHFSNIPPLEN). Positions 379–395 (LQTVITTTTKVSYQAYQ) are C-terminal conserved inhibitory domain (CCID).

It is found in the nucleus. Its function is as follows. Transcription factor that binds specific sequences on gene promoters and activate their transcription. Through the regulation of gene transcription, may play a role in parathyroid gland development. The polypeptide is Chorion-specific transcription factor GCMb (Homo sapiens (Human)).